The chain runs to 305 residues: Putative HTH-type transcriptional regulatory protein Saci_1344 (305 aa).

The HTH cro/C1-type domain occupies 128–183; that stretch reads LREKREEKNMSLGELSQRLGVSRISVYDYEKEDSYVSIEVAEKLIEIFGDEVIGDI. Positions 139 to 158 form a DNA-binding region, H-T-H motif; that stretch reads LGELSQRLGVSRISVYDYEK.

The sequence is that of Putative HTH-type transcriptional regulatory protein Saci_1344 from Sulfolobus acidocaldarius (strain ATCC 33909 / DSM 639 / JCM 8929 / NBRC 15157 / NCIMB 11770).